A 256-amino-acid chain; its full sequence is Small ribosomal subunit protein eS1 (256 aa).

At alanine 2 the chain carries N-acetylalanine; partial.

This sequence belongs to the eukaryotic ribosomal protein eS1 family. In terms of assembly, component of the small ribosomal subunit. Mature ribosomes consist of a small (40S) and a large (60S) subunit. The 40S subunit contains about 33 different proteins and 1 molecule of RNA (18S). The 60S subunit contains about 49 different proteins and 3 molecules of RNA (25S, 5.8S and 5S).

The protein resides in the cytoplasm. This Sclerotinia sclerotiorum (strain ATCC 18683 / 1980 / Ss-1) (White mold) protein is Small ribosomal subunit protein eS1 (rps1).